Reading from the N-terminus, the 301-residue chain is 4-hydroxy-tetrahydrodipicolinate synthase (301 aa).

Position 50 (threonine 50) interacts with pyruvate. Catalysis depends on tyrosine 138, which acts as the Proton donor/acceptor. Lysine 167 serves as the catalytic Schiff-base intermediate with substrate. Isoleucine 209 lines the pyruvate pocket.

This sequence belongs to the DapA family. As to quaternary structure, homotetramer; dimer of dimers.

It localises to the cytoplasm. The enzyme catalyses L-aspartate 4-semialdehyde + pyruvate = (2S,4S)-4-hydroxy-2,3,4,5-tetrahydrodipicolinate + H2O + H(+). The protein operates within amino-acid biosynthesis; L-lysine biosynthesis via DAP pathway; (S)-tetrahydrodipicolinate from L-aspartate: step 3/4. In terms of biological role, catalyzes the condensation of (S)-aspartate-beta-semialdehyde [(S)-ASA] and pyruvate to 4-hydroxy-tetrahydrodipicolinate (HTPA). The chain is 4-hydroxy-tetrahydrodipicolinate synthase from Sorangium cellulosum (strain So ce56) (Polyangium cellulosum (strain So ce56)).